A 377-amino-acid polypeptide reads, in one-letter code: uncharacterized protein (377 aa).

Transmembrane regions (helical) follow at residues 4–24, 41–61, 85–105, 134–154, 159–179, 192–212, 278–298, 301–321, 327–347, and 356–376; these read LLTP…LLGT, ASFG…FPIT, IAAL…FLFG, FHAM…IATV, VYVH…PFLL, GAVG…IALA, VFGI…AGFV, GVGY…DLVV, IASV…AIGL, and LCFF…PVLK.

To R.meliloti MosC.

The protein localises to the cell membrane. In terms of biological role, could be involved in a transport system. This is an uncharacterized protein from Sinorhizobium fredii (strain NBRC 101917 / NGR234).